Reading from the N-terminus, the 258-residue chain is Cholera enterotoxin subunit A (258 aa).

Residues M1–A18 form the signal peptide. NAD(+) is bound by residues R25–S28 and M41–R43. E130 is a catalytic residue. Residues C205 and C217 are joined by a disulfide bond.

This sequence belongs to the enterotoxin A family. As to quaternary structure, the holotoxin (choleragen) consists of a pentameric ring of B subunits whose central pore is occupied by the A subunit. The A subunit contains two chains, A1 and A2, linked by a disulfide bridge. Interaction with the host protein ARF6 causes a conformation change so that the enterotoxin subunit A1 can bind NAD and catalyze the ADP-ribosylation of the host Gs alpha.

Functionally, the A1 chain catalyzes the ADP-ribosylation of Gs alpha, a GTP-binding regulatory protein, to activate the adenylate cyclase. This leads to an overproduction of cAMP and eventually to a hypersecretion of chloride and bicarbonate followed by water, resulting in the characteristic cholera stool. The A2 chain tethers A1 to the pentameric ring. This Vibrio cholerae serotype O1 (strain ATCC 39315 / El Tor Inaba N16961) protein is Cholera enterotoxin subunit A (ctxA).